A 436-amino-acid chain; its full sequence is Tubulin epsilon and delta complex protein 2 (436 aa).

Disordered stretches follow at residues 53–76 and 94–191; these read ARTP…PSSQ and VRKG…PSSA. Low complexity predominate over residues 111–131; it reads TSKAATSGAAAASHPRAPSRG. Positions 153–170 are enriched in basic and acidic residues; sequence DYPEHRLRSKGDKTHVRT. Ser161 is subject to Phosphoserine.

Interacts with TEDC1. Found in a complex with TEDC1, TEDC2, TUBE1 and TUBD1.

The protein resides in the cell projection. It is found in the cilium. Its subcellular location is the cytoplasm. It localises to the cytoskeleton. The protein localises to the microtubule organizing center. The protein resides in the centrosome. It is found in the centriole. Acts as a positive regulator of ciliary hedgehog signaling. Required for centriole stability. This is Tubulin epsilon and delta complex protein 2 from Mus musculus (Mouse).